A 244-amino-acid chain; its full sequence is 5-oxoprolinase subunit A (244 aa).

The protein belongs to the LamB/PxpA family. In terms of assembly, forms a complex composed of PxpA, PxpB and PxpC.

It catalyses the reaction 5-oxo-L-proline + ATP + 2 H2O = L-glutamate + ADP + phosphate + H(+). In terms of biological role, catalyzes the cleavage of 5-oxoproline to form L-glutamate coupled to the hydrolysis of ATP to ADP and inorganic phosphate. This chain is 5-oxoprolinase subunit A, found in Shigella flexneri.